The sequence spans 1396 residues: ATP-binding cassette transporter pdr1 (1396 aa).

The tract at residues 1 to 22 is disordered; the sequence is MSEQEKGKGDLDDPNSKNTKCP. The ABC transporter 1 domain occupies 73-320; it reads LHPINIIFRT…FLDLGFIPAK (248 aa). The ABC transmembrane type-2 1 domain maps to 412-622; the sequence is LQVFATAKVT…GYESIMLNEF (211 aa). The next 6 membrane-spanning stretches (helical) occupy residues 431–451, 466–486, 512–532, 543–563, 572–592, and 680–700; these read YIAT…SLFY, VLSN…DIIF, LVEF…VYFL, FIFY…FRFI, IAAL…GAVM, and GIIL…ANFI. The ABC transporter 2 domain maps to 758–1001; it reads LCWRDLNFTV…LVNYFKRIHG (244 aa). 794 to 801 contributes to the ATP binding site; it reads GENKSGKS. Residues 1071-1286 form the ABC transmembrane type-2 2 domain; that stretch reads FQIYKISMRN…FLEGMIGGVL (216 aa). 5 helical membrane passes run 1095–1115, 1166–1186, 1208–1228, 1245–1265, and 1361–1381; these read VAFN…QGVG, FIIA…TLFF, FAWL…IGIA, FVFI…VGFW, and CIMI…YYII.

This sequence belongs to the ABC transporter superfamily. ABCG family. PDR (TC 3.A.1.205) subfamily.

It localises to the endoplasmic reticulum membrane. The chain is ATP-binding cassette transporter pdr1 (pdr1) from Schizosaccharomyces pombe (strain 972 / ATCC 24843) (Fission yeast).